Reading from the N-terminus, the 439-residue chain is Mitochondrial distribution and morphology protein 12 (439 aa).

Positions 1–439 (MSIDINWDTI…VYPSFWTFLV (439 aa)) constitute an SMP-LTD domain. Disordered stretches follow at residues 65-165 (PLPD…PGAL) and 229-284 (LTLT…HEKS). The segment covering 69–90 (FYEDDEDYPDEEGDEAENEAED) has biased composition (acidic residues). Over residues 109-121 (PSRDSQSRERGRG) the composition is skewed to basic and acidic residues. Positions 229–243 (LTLTPQSHPDPTSRP) are enriched in polar residues.

The protein belongs to the MDM12 family. Component of the ER-mitochondria encounter structure (ERMES) or MDM complex, composed of MMM1, MDM10, mdm12 and MDM34. An MMM1 homodimer associates with one molecule of mdm12 on each side in a pairwise head-to-tail manner, and the SMP-LTD domains of MMM1 and mdm12 generate a continuous hydrophobic tunnel for phospholipid trafficking.

The protein localises to the mitochondrion outer membrane. Its subcellular location is the endoplasmic reticulum membrane. In terms of biological role, component of the ERMES/MDM complex, which serves as a molecular tether to connect the endoplasmic reticulum (ER) and mitochondria. Components of this complex are involved in the control of mitochondrial shape and protein biogenesis, and function in nonvesicular lipid trafficking between the ER and mitochondria. mdm12 is required for the interaction of the ER-resident membrane protein MMM1 and the outer mitochondrial membrane-resident beta-barrel protein MDM10. The mdm12-MMM1 subcomplex functions in the major beta-barrel assembly pathway that is responsible for biogenesis of all mitochondrial outer membrane beta-barrel proteins, and acts in a late step after the SAM complex. The MDM10-mdm12-MMM1 subcomplex further acts in the TOM40-specific pathway after the action of the mdm12-MMM1 complex. Essential for establishing and maintaining the structure of mitochondria and maintenance of mtDNA nucleoids. The sequence is that of Mitochondrial distribution and morphology protein 12 from Pyrenophora tritici-repentis (strain Pt-1C-BFP) (Wheat tan spot fungus).